We begin with the raw amino-acid sequence, 459 residues long: Methylenetetrahydrofolate--tRNA-(uracil-5-)-methyltransferase TrmFO (459 aa).

26-31 (GGGLAG) is a binding site for FAD.

This sequence belongs to the MnmG family. TrmFO subfamily. FAD serves as cofactor.

Its subcellular location is the cytoplasm. It carries out the reaction uridine(54) in tRNA + (6R)-5,10-methylene-5,6,7,8-tetrahydrofolate + NADH + H(+) = 5-methyluridine(54) in tRNA + (6S)-5,6,7,8-tetrahydrofolate + NAD(+). The catalysed reaction is uridine(54) in tRNA + (6R)-5,10-methylene-5,6,7,8-tetrahydrofolate + NADPH + H(+) = 5-methyluridine(54) in tRNA + (6S)-5,6,7,8-tetrahydrofolate + NADP(+). Its function is as follows. Catalyzes the folate-dependent formation of 5-methyl-uridine at position 54 (M-5-U54) in all tRNAs. The chain is Methylenetetrahydrofolate--tRNA-(uracil-5-)-methyltransferase TrmFO from Synechococcus sp. (strain JA-2-3B'a(2-13)) (Cyanobacteria bacterium Yellowstone B-Prime).